A 240-amino-acid chain; its full sequence is Putative peptidoglycan hydrolase Rv2525c (240 aa).

A signal peptide (tat-type signal) is located at residues 1–33; it reads MSVSRRDVLKFAAATPGVLGLGVVASSLRAAPA.

In terms of processing, predicted to be exported by the Tat system. The position of the signal peptide cleavage has not been experimentally proven.

The protein localises to the secreted. It carries out the reaction Hydrolysis of (1-&gt;4)-beta-linkages between N-acetylmuramic acid and N-acetyl-D-glucosamine residues in a peptidoglycan and between N-acetyl-D-glucosamine residues in chitodextrins.. It participates in cell wall degradation; peptidoglycan degradation. In terms of biological role, may function as a peptidoglycan hydrolase with glycosidase activity. In vitro, displays esterase activity toward p-nitrophenyl esters of various acyl chain length (C4 to C16), with a preference for p-nitrophenyl butyrate (C4). This is Putative peptidoglycan hydrolase Rv2525c from Mycobacterium tuberculosis (strain ATCC 25618 / H37Rv).